We begin with the raw amino-acid sequence, 176 residues long: R-phycoerythrin beta chain (176 aa).

Phycourobilin contacts are provided by Cys50 and Cys61. Asn72 is subject to N4-methylasparagine. (2R,3E)-phycoerythrobilin contacts are provided by Cys82 and Cys158.

The protein belongs to the phycobiliprotein family. Heterodimer of an alpha and a beta chain. In terms of processing, contains two covalently linked phycoerythrobilin chromophores and one covalently linked phycourobilin chromophore.

The protein resides in the plastid. It is found in the chloroplast thylakoid membrane. Functionally, light-harvesting photosynthetic bile pigment-protein from the phycobiliprotein complex. This is R-phycoerythrin beta chain (cpeB) from Aglaothamnion neglectum (Red alga).